Reading from the N-terminus, the 90-residue chain is Cell division protein CrgA (90 aa).

Positions 1 to 25 are disordered; sequence MPKARVTKNETAPVSSNPSANRTPV. Positions 9 to 22 are enriched in polar residues; the sequence is NETAPVSSNPSANR. Helical transmembrane passes span 38 to 58 and 67 to 87; these read VIMF…YLVG and LGAW…LMTM.

Belongs to the CrgA family.

It localises to the cell membrane. In terms of biological role, involved in cell division. The sequence is that of Cell division protein CrgA from Corynebacterium glutamicum (strain R).